We begin with the raw amino-acid sequence, 196 residues long: Transcription repressor OFP10 (196 aa).

The 60-residue stretch at 100 to 159 folds into the OVATE domain; sequence MAKESINPFEDYKKSMNQMIEERYIETESELKELLRCFLDINPSPQHNLIVRAFVDVCSH.

In terms of tissue distribution, expressed in roots, cauline leaves, shoots, stems, flower buds and siliques.

The protein resides in the nucleus. Transcriptional repressor that may regulate multiple aspects of plant growth and development through the regulation of BEL1-LIKE (BLH) and KNOX TALE (KNAT) homeodomain transcription factors. The protein is Transcription repressor OFP10 (OFP10) of Arabidopsis thaliana (Mouse-ear cress).